The primary structure comprises 649 residues: DNA topoisomerase 3 (649 aa).

Positions 1–134 constitute a Toprim domain; that stretch reads MRLFIAEKPS…KRQQVRRCLI (134 aa). Glutamate 7, aspartate 103, and aspartate 105 together coordinate Mg(2+). The Topo IA-type catalytic domain maps to 155-603; that stretch reads FVPLCVSALA…PLVGTLYQLI (449 aa). Residues 194-199 are interaction with DNA; it reads SVGRVQ. The active-site O-(5'-phospho-DNA)-tyrosine intermediate is the tyrosine 328. The segment at 614 to 649 is disordered; it reads FRGIVAPGGGDKKKSAPRKRAGKKSPPAAETGRQTE.

Belongs to the type IA topoisomerase family. Mg(2+) serves as cofactor.

The enzyme catalyses ATP-independent breakage of single-stranded DNA, followed by passage and rejoining.. Its function is as follows. Releases the supercoiling and torsional tension of DNA, which is introduced during the DNA replication and transcription, by transiently cleaving and rejoining one strand of the DNA duplex. Introduces a single-strand break via transesterification at a target site in duplex DNA. The scissile phosphodiester is attacked by the catalytic tyrosine of the enzyme, resulting in the formation of a DNA-(5'-phosphotyrosyl)-enzyme intermediate and the expulsion of a 3'-OH DNA strand. The free DNA strand then undergoes passage around the unbroken strand, thus removing DNA supercoils. Finally, in the religation step, the DNA 3'-OH attacks the covalent intermediate to expel the active-site tyrosine and restore the DNA phosphodiester backbone. The chain is DNA topoisomerase 3 from Salmonella typhimurium (strain LT2 / SGSC1412 / ATCC 700720).